Reading from the N-terminus, the 33-residue chain is Alpha-amanitin proprotein (33 aa).

The propeptide occupies Met-1–Pro-10. Ile-11 bears the (3R,4R)-4,5-dihydroxyisoleucine; in form alpha-amanitin mark. The residue at position 11 (Ile-11) is a (3R,4S)-4-hydroxyisoleucine; in form gamma-amanitin. Residues Ile-11–Pro-18 constitute a cross-link (cyclopeptide (Ile-Pro)). Residues Trp-12 to Cys-16 constitute a cross-link (2'-cysteinyl-6'-hydroxytryptophan sulfoxide (Trp-Cys)). The residue at position 18 (Pro-18) is a 4-hydroxyproline. Residues Cys-19 to Ala-33 constitute a propeptide that is removed on maturation.

It belongs to the MSDIN fungal toxin family. In terms of processing, processed by the macrocyclase-peptidase enzyme POPB to yield a toxic cyclic decapeptide. POPB first removes 10 residues from the N-terminus. Conformational trapping of the remaining peptide forces the enzyme to release this intermediate rather than proceed to macrocyclization. The enzyme rebinds the remaining peptide in a different conformation and catalyzes macrocyclization of the N-terminal 8 residues.

In terms of biological role, major toxin belonging to the bicyclic octapeptides amatoxins that acts by binding non-competitively to RNA polymerase II and greatly slowing the elongation of transcripts from target promoters. This is Alpha-amanitin proprotein from Amanita pallidorosea.